The chain runs to 429 residues: GDP-fucose protein O-fucosyltransferase 2 (429 aa).

Positions 1 to 21 (MATLSFVFLLLGAVSWPPASA) are cleaved as a signal peptide. GDP-beta-L-fucose is bound at residue 53–57 (PEGFN). Catalysis depends on Glu54, which acts as the Proton acceptor. The cysteines at positions 161 and 192 are disulfide-linked. N-linked (GlcNAc...) asparagine glycans are attached at residues Asn189, Asn209, and Asn259. GDP-beta-L-fucose contacts are provided by residues 292-294 (HLR), Asp371, and 388-389 (TF). Cys412 and Cys419 are disulfide-bonded.

This sequence belongs to the glycosyltransferase 68 family.

The protein localises to the endoplasmic reticulum. Its subcellular location is the golgi apparatus. It catalyses the reaction L-seryl-[protein] + GDP-beta-L-fucose = 3-O-(alpha-L-fucosyl)-L-seryl-[protein] + GDP + H(+). The catalysed reaction is L-threonyl-[protein] + GDP-beta-L-fucose = 3-O-(alpha-L-fucosyl)-L-threonyl-[protein] + GDP + H(+). It functions in the pathway protein modification; protein glycosylation. Catalyzes the reaction that attaches fucose through an O-glycosidic linkage to a conserved serine or threonine residue in the consensus sequence C1-X-X-S/T-C2 of thrombospondin type I repeats (TSRs) where C1 and C2 are the first and second cysteines of the repeat, respectively. O-fucosylates members of several protein families including the ADAMTS, the thrombospondin (TSP) and spondin families. Required for the proper secretion of ADAMTS family members such as ADAMTSL1 and ADAMTS13. The O-fucosylation of TSRs is also required for restricting epithelial to mesenchymal transition (EMT), maintaining the correct patterning of mesoderm and localization of the definite endoderm. The sequence is that of GDP-fucose protein O-fucosyltransferase 2 (POFUT2) from Pan troglodytes (Chimpanzee).